We begin with the raw amino-acid sequence, 356 residues long: Glutamine synthetase N-1 (356 aa).

A GS beta-grasp domain is found at 19 to 99 (VIAEYIWVGG…VMCDAYTPAG (81 aa)). One can recognise a GS catalytic domain in the interval 106 to 356 (KRHNAAKIFS…IAETTLLWKP (251 aa)).

Belongs to the glutamine synthetase family. Homooctamer. As to expression, this is a nodule isozyme.

Its subcellular location is the cytoplasm. The enzyme catalyses L-glutamate + NH4(+) + ATP = L-glutamine + ADP + phosphate + H(+). This is Glutamine synthetase N-1 (Gln-gamma) from Phaseolus vulgaris (Kidney bean).